A 158-amino-acid chain; its full sequence is Small ribosomal subunit protein bS6 (158 aa).

The tract at residues 98-158 (EAPSAPLARR…DRDEDQNEEN (61 aa)) is disordered. 2 stretches are compositionally biased toward basic and acidic residues: residues 106–117 (RRGEDRDRDRGF) and 127–150 (DSGRRRGADDREEYRARDEYRSDR).

Belongs to the bacterial ribosomal protein bS6 family.

Functionally, binds together with bS18 to 16S ribosomal RNA. The chain is Small ribosomal subunit protein bS6 from Acidiphilium cryptum (strain JF-5).